The chain runs to 208 residues: V-type ATP synthase subunit D (208 aa).

This sequence belongs to the V-ATPase D subunit family.

Functionally, produces ATP from ADP in the presence of a proton gradient across the membrane. The sequence is that of V-type ATP synthase subunit D from Streptococcus pyogenes serotype M1.